The sequence spans 106 residues: Iron-sulfur cluster assembly protein CyaY (106 aa).

Belongs to the frataxin family.

In terms of biological role, involved in iron-sulfur (Fe-S) cluster assembly. May act as a regulator of Fe-S biogenesis. The sequence is that of Iron-sulfur cluster assembly protein CyaY from Pectobacterium atrosepticum (strain SCRI 1043 / ATCC BAA-672) (Erwinia carotovora subsp. atroseptica).